Reading from the N-terminus, the 750-residue chain is Photosystem I P700 chlorophyll a apoprotein A1 (750 aa).

8 consecutive transmembrane segments (helical) span residues 70 to 93 (VFSA…FHGA), 156 to 179 (LYCT…FHYH), 195 to 219 (LNHH…HVSL), 291 to 309 (IAHH…GHMY), 346 to 369 (WHAQ…HHMY), 385 to 411 (LSLF…IFMV), 433 to 455 (AIIS…LYIH), and 531 to 549 (FLVH…LILL). Residues cysteine 573 and cysteine 582 each coordinate [4Fe-4S] cluster. A run of 2 helical transmembrane segments spans residues 589-610 (HVFL…HFSW) and 664-686 (LSAY…MFLF). A chlorophyll a'-binding site is contributed by histidine 675. Methionine 683 and tyrosine 691 together coordinate chlorophyll a. A phylloquinone-binding site is contributed by tryptophan 692. A helical transmembrane segment spans residues 724–744 (AVGVTHYLLGGIATTWAFFLA).

It belongs to the PsaA/PsaB family. The PsaA/B heterodimer binds the P700 chlorophyll special pair and subsequent electron acceptors. PSI consists of a core antenna complex that captures photons, and an electron transfer chain that converts photonic excitation into a charge separation. The eukaryotic PSI reaction center is composed of at least 11 subunits. Requires P700 is a chlorophyll a/chlorophyll a' dimer, A0 is one or more chlorophyll a, A1 is one or both phylloquinones and FX is a shared 4Fe-4S iron-sulfur center. as cofactor.

Its subcellular location is the plastid. It is found in the chloroplast thylakoid membrane. It carries out the reaction reduced [plastocyanin] + hnu + oxidized [2Fe-2S]-[ferredoxin] = oxidized [plastocyanin] + reduced [2Fe-2S]-[ferredoxin]. Its function is as follows. PsaA and PsaB bind P700, the primary electron donor of photosystem I (PSI), as well as the electron acceptors A0, A1 and FX. PSI is a plastocyanin-ferredoxin oxidoreductase, converting photonic excitation into a charge separation, which transfers an electron from the donor P700 chlorophyll pair to the spectroscopically characterized acceptors A0, A1, FX, FA and FB in turn. Oxidized P700 is reduced on the lumenal side of the thylakoid membrane by plastocyanin. The sequence is that of Photosystem I P700 chlorophyll a apoprotein A1 from Citrus sinensis (Sweet orange).